The sequence spans 98 residues: Aspartyl/glutamyl-tRNA(Asn/Gln) amidotransferase subunit C (98 aa).

Residues 76-98 form a disordered region; that stretch reads QVLSGAPDAEDGRFKVPAILEED.

This sequence belongs to the GatC family. In terms of assembly, heterotrimer of A, B and C subunits.

The enzyme catalyses L-glutamyl-tRNA(Gln) + L-glutamine + ATP + H2O = L-glutaminyl-tRNA(Gln) + L-glutamate + ADP + phosphate + H(+). The catalysed reaction is L-aspartyl-tRNA(Asn) + L-glutamine + ATP + H2O = L-asparaginyl-tRNA(Asn) + L-glutamate + ADP + phosphate + 2 H(+). Its function is as follows. Allows the formation of correctly charged Asn-tRNA(Asn) or Gln-tRNA(Gln) through the transamidation of misacylated Asp-tRNA(Asn) or Glu-tRNA(Gln) in organisms which lack either or both of asparaginyl-tRNA or glutaminyl-tRNA synthetases. The reaction takes place in the presence of glutamine and ATP through an activated phospho-Asp-tRNA(Asn) or phospho-Glu-tRNA(Gln). The chain is Aspartyl/glutamyl-tRNA(Asn/Gln) amidotransferase subunit C from Renibacterium salmoninarum (strain ATCC 33209 / DSM 20767 / JCM 11484 / NBRC 15589 / NCIMB 2235).